The following is a 660-amino-acid chain: MGVIQRLDTHTVNQIAAGEVVERPASIVKELLENALDAGATRIDITLAEGGKKLIRIIDNGCGMAADDAELCVERHATSKIRRAEDLMAVQTLGFRGEALPSIAAVSRLVITTRRSIDNQATRVRIDGGERYPIEAVGAPPGTTVQVEDLFFNTPARRKFLRSATAEGSACAEVIWRLAAAYPHVAFSLTQGKQISFRSPGNNKPLETLSAVFGREIISFLLPLSAVAPDGWTLRGFIGSPSLHRNNRNHQNWFVNQRWVRCRILSQAVEEAYHGMLPGGRFPFFVLHLELPPQTIDVNSHPTKQEIKFDRERDVADFTRQTVLQTLRSRPLSRPLWSLASFQSDGAPPTQQLSSDVREKAEGERWRQDRILLYREGALSPTKQELPKSPERSERVERLNSGDFGQGRALYRESSQELPTDCLRESLEETESQSESIRQCLSENLPLHRQEPRAEKECQPVEGLVAGDVAEWIPIGQFRRSYILAEGGDTLYLVDQHAAHERVLYHGLKERYLNEAGVCASQQLLLPVTVTLTPAEFQGAMEAIAELRDAGLIVEHFGGNTLLIRAVPVGLPPGEEKGFFRDILNSLMKGLRDREVIRRAALSSMACRGAVKAGQVMSHAEMGALLQQLARLEGVDTCPHGRPYLLRIDRRELERRFYRS.

The segment covering 341–355 has biased composition (polar residues); sequence SFQSDGAPPTQQLSS. Disordered regions lie at residues 341–362 and 378–398; these read SFQS…EKAE and ALSP…RVER. Basic and acidic residues predominate over residues 385 to 398; sequence ELPKSPERSERVER.

Belongs to the DNA mismatch repair MutL/HexB family.

Its function is as follows. This protein is involved in the repair of mismatches in DNA. It is required for dam-dependent methyl-directed DNA mismatch repair. May act as a 'molecular matchmaker', a protein that promotes the formation of a stable complex between two or more DNA-binding proteins in an ATP-dependent manner without itself being part of a final effector complex. The sequence is that of DNA mismatch repair protein MutL from Heliobacterium modesticaldum (strain ATCC 51547 / Ice1).